Consider the following 622-residue polypeptide: Iron transport multicopper oxidase FET5 (622 aa).

The N-terminal stretch at Met-1–Ala-18 is a signal peptide. Residues Lys-19 to Leu-573 are Extracellular-facing. Residue Asn-24 is glycosylated (N-linked (GlcNAc...) asparagine). Plastocyanin-like domains lie at Ile-43–His-146 and Asn-192–Arg-301. Residues His-79 and His-81 each coordinate Cu cation. N-linked (GlcNAc...) asparagine glycosylation is found at Asn-86 and Asn-115. Cu cation contacts are provided by His-128 and His-130. N-linked (GlcNAc...) asparagine glycans are attached at residues Asn-196, Asn-200, Asn-246, Asn-295, and Asn-364. The 123-residue stretch at Gly-392–Ala-514 folds into the Plastocyanin-like 3 domain. Residues His-418, His-421, and His-423 each coordinate Cu cation. A glycan (N-linked (GlcNAc...) asparagine) is linked at Asn-455. Residues His-496, Cys-497, His-498, and His-502 each contribute to the Cu cation site. Residues Ala-574 to Ile-594 form a helical membrane-spanning segment. Topologically, residues Gly-595 to Gly-622 are cytoplasmic.

It belongs to the multicopper oxidase family. Interacts with FTH1. Requires Cu cation as cofactor.

It is found in the cell membrane. Its function is as follows. Iron transport multicopper oxidase, which is required for Fe(2+) high affinity uptake. May be required to oxidize Fe(2+) and release it from the transporter. Essential component of copper-dependent iron transport. The chain is Iron transport multicopper oxidase FET5 (FET5) from Saccharomyces cerevisiae (strain ATCC 204508 / S288c) (Baker's yeast).